The chain runs to 463 residues: Phosphomannomutase (463 aa).

S103 acts as the Phosphoserine intermediate in catalysis. Positions 103, 248, 250, and 252 each coordinate Mg(2+).

This sequence belongs to the phosphohexose mutase family. Mg(2+) is required as a cofactor.

It localises to the cell membrane. It carries out the reaction alpha-D-mannose 1-phosphate = D-mannose 6-phosphate. It participates in nucleotide-sugar biosynthesis; GDP-alpha-D-mannose biosynthesis; alpha-D-mannose 1-phosphate from D-fructose 6-phosphate: step 2/2. Its pathway is bacterial outer membrane biogenesis; LPS O-antigen biosynthesis. Functionally, involved in GDP-mannose biosynthesis which serves as the activated sugar nucleotide precursor for mannose residues in cell surface polysaccharides. The chain is Phosphomannomutase (rfbB) from Vibrio cholerae serotype O1 (strain ATCC 39315 / El Tor Inaba N16961).